Here is a 396-residue protein sequence, read N- to C-terminus: MAKAKFERTKPHCNIGTIGHVDHGKTSLTAAITKVLAKTGGATYSAYDQIDKAPEERARGITISTAHVEYETADRHYAHVDCPGHADYVKNMITGAAQMDGAILVVSAADGPMPQTREHILLARQVGVPALVVFLNKVDQVDDPELLELVEMEVRELLSSYQFPGDDIPIVKGSALVTLEDGDPSIGEDRVLELMTQVDAYIPQPERPVDRPFLMPIEDVFSISGRGTVVTGRVERGVVNVGDEVEIVGLKDTVKTTVTGVEMFRKLLDRGEAGDNIGALVRGTKREDVERGQVLAKPGSITPHKKFKAEAYILTKEEGGRHTPFFTNYRPQFYFRTTDVTGVVTLPEGTEMVMPGDNVAMDVELIAPIAMDEGLRFAIREGGRTVGAGVVSSITA.

The tr-type G domain maps to 10 to 206 (KPHCNIGTIG…QVDAYIPQPE (197 aa)). Residues 19-26 (GHVDHGKT) form a G1 region. A GTP-binding site is contributed by 19 to 26 (GHVDHGKT). Thr-26 is a Mg(2+) binding site. The G2 stretch occupies residues 60-64 (GITIS). The tract at residues 81-84 (DCPG) is G3. Residues 81-85 (DCPGH) and 136-139 (NKVD) each bind GTP. Positions 136–139 (NKVD) are G4. The interval 174–176 (SAL) is G5.

This sequence belongs to the TRAFAC class translation factor GTPase superfamily. Classic translation factor GTPase family. EF-Tu/EF-1A subfamily. In terms of assembly, monomer.

The protein localises to the cytoplasm. The enzyme catalyses GTP + H2O = GDP + phosphate + H(+). Functionally, GTP hydrolase that promotes the GTP-dependent binding of aminoacyl-tRNA to the A-site of ribosomes during protein biosynthesis. In Gluconobacter oxydans (strain 621H) (Gluconobacter suboxydans), this protein is Elongation factor Tu.